We begin with the raw amino-acid sequence, 401 residues long: Beta-ketoadipyl-CoA thiolase (401 aa).

Cysteine 91 (acyl-thioester intermediate) is an active-site residue. Active-site proton acceptor residues include histidine 357 and cysteine 387.

The protein belongs to the thiolase-like superfamily. Thiolase family.

The catalysed reaction is succinyl-CoA + acetyl-CoA = 3-oxoadipyl-CoA + CoA. It participates in aromatic compound metabolism; beta-ketoadipate pathway; acetyl-CoA and succinyl-CoA from 3-oxoadipate: step 2/2. Functionally, catalyzes thiolytic cleavage of beta-ketoadipyl-CoA to succinyl-CoA and acetyl-CoA. In Pseudomonas aeruginosa (strain ATCC 15692 / DSM 22644 / CIP 104116 / JCM 14847 / LMG 12228 / 1C / PRS 101 / PAO1), this protein is Beta-ketoadipyl-CoA thiolase (pcaF).